A 197-amino-acid polypeptide reads, in one-letter code: SIGLEC family-like protein 1 (197 aa).

Residues Gly-118 to Val-138 traverse the membrane as a helical segment. Positions Val-160 to Val-179 are disordered. The span at Ala-162 to Gly-176 shows a compositional bias: basic and acidic residues.

Its subcellular location is the membrane. This Homo sapiens (Human) protein is SIGLEC family-like protein 1 (SIGLECL1).